The chain runs to 136 residues: Small ribosomal subunit protein uS8 (136 aa).

It belongs to the universal ribosomal protein uS8 family. In terms of assembly, part of the 30S ribosomal subunit. Contacts proteins S5 and S12.

In terms of biological role, one of the primary rRNA binding proteins, it binds directly to 16S rRNA central domain where it helps coordinate assembly of the platform of the 30S subunit. This chain is Small ribosomal subunit protein uS8, found in Sulfurihydrogenibium sp. (strain YO3AOP1).